A 323-amino-acid polypeptide reads, in one-letter code: Ribosomal protein L11 methyltransferase (323 aa).

S-adenosyl-L-methionine contacts are provided by threonine 160, glycine 184, aspartate 206, and asparagine 257.

This sequence belongs to the methyltransferase superfamily. PrmA family.

It is found in the cytoplasm. It catalyses the reaction L-lysyl-[protein] + 3 S-adenosyl-L-methionine = N(6),N(6),N(6)-trimethyl-L-lysyl-[protein] + 3 S-adenosyl-L-homocysteine + 3 H(+). Functionally, methylates ribosomal protein L11. This is Ribosomal protein L11 methyltransferase from Agathobacter rectalis (strain ATCC 33656 / DSM 3377 / JCM 17463 / KCTC 5835 / VPI 0990) (Eubacterium rectale).